Reading from the N-terminus, the 598-residue chain is Elongation factor 4 (598 aa).

The 183-residue stretch at 5 to 187 (SHIRNFSIIA…RLVATIPAPT (183 aa)) folds into the tr-type G domain. GTP is bound by residues 17–22 (DHGKST) and 134–137 (NKMD).

Belongs to the TRAFAC class translation factor GTPase superfamily. Classic translation factor GTPase family. LepA subfamily.

It localises to the cell inner membrane. The catalysed reaction is GTP + H2O = GDP + phosphate + H(+). Its function is as follows. Required for accurate and efficient protein synthesis under certain stress conditions. May act as a fidelity factor of the translation reaction, by catalyzing a one-codon backward translocation of tRNAs on improperly translocated ribosomes. Back-translocation proceeds from a post-translocation (POST) complex to a pre-translocation (PRE) complex, thus giving elongation factor G a second chance to translocate the tRNAs correctly. Binds to ribosomes in a GTP-dependent manner. The polypeptide is Elongation factor 4 (Pseudomonas syringae pv. syringae (strain B728a)).